A 407-amino-acid chain; its full sequence is MKRAFIMVLDSFGIGATEDAERFGDVGADTLGHIAEACAKGEADHGRKGPLNLPNLTRLGLAKAHEGSTGFIPAGMDGNAEVIGAYAWAHEMSSGKDTPSGHWEIAGVPVLFEWGYFSDHENSFPQELLDKLVERANLPGYLGNCHSSGTVILDQLGEEHMKTGKPIFYTSADSVFQIACHEETFGLDKLYELCEIAREELTNGGYNIGRVIARPFIGDKAGNFQRTGNRHDLAVEPPAPTVLQKLVDEKHGQVVSVGKIADIYANCGITKKVKATGLDALFDATIKEMKEAGDNTIVFTNFVDFDSSWGHRRDVAGYAAGLELFDRRLPELMSLLRDDDILILTADHGCDPTWTGTDHTREHIPVLVYGPKVKPGSLGHRETFADIGQTLAKYFGTSDMEYGKAMF.

Positions 10, 306, 311, 347, 348, and 359 each coordinate Mn(2+).

Belongs to the phosphopentomutase family. Mn(2+) is required as a cofactor.

It is found in the cytoplasm. The catalysed reaction is 2-deoxy-alpha-D-ribose 1-phosphate = 2-deoxy-D-ribose 5-phosphate. It carries out the reaction alpha-D-ribose 1-phosphate = D-ribose 5-phosphate. The protein operates within carbohydrate degradation; 2-deoxy-D-ribose 1-phosphate degradation; D-glyceraldehyde 3-phosphate and acetaldehyde from 2-deoxy-alpha-D-ribose 1-phosphate: step 1/2. Functionally, isomerase that catalyzes the conversion of deoxy-ribose 1-phosphate (dRib-1-P) and ribose 1-phosphate (Rib-1-P) to deoxy-ribose 5-phosphate (dRib-5-P) and ribose 5-phosphate (Rib-5-P), respectively. This is Phosphopentomutase from Escherichia coli (strain UTI89 / UPEC).